A 1246-amino-acid polypeptide reads, in one-letter code: Zinc finger protein 687a (1246 aa).

A compositionally biased stretch (basic and acidic residues) spans Lys-24–Ser-47. Residues Lys-24–Ala-387 are disordered. Polar residues-rich tracts occupy residues Gly-88–Pro-111 and Ala-163–Lys-195. The span at Ser-287–Pro-301 shows a compositional bias: low complexity. Positions Val-302–Pro-317 are enriched in basic and acidic residues. Over residues Gln-326–Ala-338 the composition is skewed to polar residues. Basic and acidic residues-rich tracts occupy residues Ser-341–Ala-350 and Met-360–Ser-375. A C2H2-type 1 zinc finger spans residues Tyr-587–His-619. Residues His-696 to Glu-719 form a C2H2-type 2; degenerate zinc finger. 3 C2H2-type zinc fingers span residues His-817–His-840, Tyr-854–His-876, and Phe-885–His-908. The disordered stretch occupies residues Thr-907–Pro-953. Over residues His-914–Leu-923 the composition is skewed to polar residues. Positions Ser-929–Glu-940 are enriched in acidic residues. C2H2-type zinc fingers lie at residues Trp-958–His-981 and Phe-988–His-1011. The segment at Phe-1018–His-1044 adopts a C2H2-type 8; degenerate zinc-finger fold. The tract at residues Ala-1045–Arg-1093 is disordered. C2H2-type zinc fingers lie at residues Ala-1137–His-1160 and His-1210–His-1232.

It belongs to the krueppel C2H2-type zinc-finger protein family. Widely expressed with highest levels in kidney, spleen and ovary.

It is found in the nucleus. In terms of biological role, may be involved in transcriptional regulation. The chain is Zinc finger protein 687a (znf687a) from Danio rerio (Zebrafish).